A 380-amino-acid polypeptide reads, in one-letter code: Glucose-1-phosphate adenylyltransferase (380 aa).

Alpha-D-glucose 1-phosphate contacts are provided by residues glycine 164, 179–180 (EK), and serine 190.

Belongs to the bacterial/plant glucose-1-phosphate adenylyltransferase family. Homotetramer.

It carries out the reaction alpha-D-glucose 1-phosphate + ATP + H(+) = ADP-alpha-D-glucose + diphosphate. It participates in glycan biosynthesis; glycogen biosynthesis. Functionally, involved in the biosynthesis of ADP-glucose, a building block required for the elongation reactions to produce glycogen. Catalyzes the reaction between ATP and alpha-D-glucose 1-phosphate (G1P) to produce pyrophosphate and ADP-Glc. The polypeptide is Glucose-1-phosphate adenylyltransferase (Streptococcus pneumoniae (strain CGSP14)).